The chain runs to 408 residues: Dihydrolipoyllysine-residue acetyltransferase component of pyruvate dehydrogenase complex (408 aa).

Positions 2-78 (PIKILMPALS…PVNSLIAVLS (77 aa)) constitute a Lipoyl-binding domain. At K43 the chain carries N6-lipoyllysine. In terms of domain architecture, Peripheral subunit-binding (PSBD) spans 128 to 165 (FASPLAKRLAKIGDIRLENVQGSGPHGRIVKQDILSYD). H381 is a catalytic residue.

It belongs to the 2-oxoacid dehydrogenase family. In terms of assembly, forms a 24-polypeptide structural core with octahedral symmetry. It depends on (R)-lipoate as a cofactor.

The catalysed reaction is N(6)-[(R)-dihydrolipoyl]-L-lysyl-[protein] + acetyl-CoA = N(6)-[(R)-S(8)-acetyldihydrolipoyl]-L-lysyl-[protein] + CoA. In terms of biological role, the pyruvate dehydrogenase complex catalyzes the overall conversion of pyruvate to acetyl-CoA and CO(2). It contains multiple copies of three enzymatic components: pyruvate dehydrogenase (E1), dihydrolipoamide acetyltransferase (E2) and lipoamide dehydrogenase (E3). The sequence is that of Dihydrolipoyllysine-residue acetyltransferase component of pyruvate dehydrogenase complex (pdhC) from Rickettsia prowazekii (strain Madrid E).